Consider the following 81-residue polypeptide: Photosystem I iron-sulfur center (81 aa).

2 4Fe-4S ferredoxin-type domains span residues A2–W31 and I39–Y68. Residues C11, C14, C17, C21, C48, C51, C54, and C58 each coordinate [4Fe-4S] cluster.

As to quaternary structure, the eukaryotic PSI reaction center is composed of at least 11 subunits. Requires [4Fe-4S] cluster as cofactor.

It localises to the plastid. It is found in the chloroplast thylakoid membrane. It carries out the reaction reduced [plastocyanin] + hnu + oxidized [2Fe-2S]-[ferredoxin] = oxidized [plastocyanin] + reduced [2Fe-2S]-[ferredoxin]. Apoprotein for the two 4Fe-4S centers FA and FB of photosystem I (PSI); essential for photochemical activity. FB is the terminal electron acceptor of PSI, donating electrons to ferredoxin. The C-terminus interacts with PsaA/B/D and helps assemble the protein into the PSI complex. Required for binding of PsaD and PsaE to PSI. PSI is a plastocyanin-ferredoxin oxidoreductase, converting photonic excitation into a charge separation, which transfers an electron from the donor P700 chlorophyll pair to the spectroscopically characterized acceptors A0, A1, FX, FA and FB in turn. This is Photosystem I iron-sulfur center from Cycas taitungensis (Prince sago).